We begin with the raw amino-acid sequence, 241 residues long: Small ribosomal subunit protein uS3 (241 aa).

The KH type-2 domain occupies 39 to 107 (MRKFVMDELK…ETHLNIVEVR (69 aa)). The segment at 214–241 (ASERRALEGDAQGPASRDRDRDRRRDNA) is disordered. The span at 229–241 (SRDRDRDRRRDNA) shows a compositional bias: basic and acidic residues.

The protein belongs to the universal ribosomal protein uS3 family. As to quaternary structure, part of the 30S ribosomal subunit. Forms a tight complex with proteins S10 and S14.

Functionally, binds the lower part of the 30S subunit head. Binds mRNA in the 70S ribosome, positioning it for translation. The sequence is that of Small ribosomal subunit protein uS3 from Rhizobium rhizogenes (strain K84 / ATCC BAA-868) (Agrobacterium radiobacter).